We begin with the raw amino-acid sequence, 415 residues long: Esterase FrsA (415 aa).

This sequence belongs to the FrsA family.

It carries out the reaction a carboxylic ester + H2O = an alcohol + a carboxylate + H(+). Catalyzes the hydrolysis of esters. This is Esterase FrsA from Yersinia enterocolitica serotype O:8 / biotype 1B (strain NCTC 13174 / 8081).